Here is a 259-residue protein sequence, read N- to C-terminus: Synaptophysin-like protein 1 (259 aa).

Over 1-33 (MAPNIYLVRQRISRLGQRMSGFQINLNPLKEPL) the chain is Cytoplasmic. One can recognise an MARVEL domain in the interval 28-237 (PLKEPLGFIK…NAWFVYKETS (210 aa)). The chain crosses the membrane as a helical span at residues 34 to 54 (GFIKVLEWIASIFAFATCGGF). Residues 55-116 (KGQTEIQVNC…LIGDYSSSAQ (62 aa)) are Vesicular-facing. Asparagine 71 carries an N-linked (GlcNAc...) asparagine glycan. A helical transmembrane segment spans residues 117–137 (FYVTFAVFVFLYCIAALLLYV). The Cytoplasmic portion of the chain corresponds to 138–150 (GYTSLYLDSRKLP). The helical transmembrane segment at 151–171 (MIDFVVTLVATFLWLVSTSAW) threads the bilayer. At 172–212 (AKALTDIKIATGHNIIDELPPCKKKAVLCYFGSVTSMGSLN) the chain is on the vesicular side. N-linked (GlcNAc...) asparagine glycosylation is present at asparagine 212. The chain crosses the membrane as a helical span at residues 213-233 (VSVIFGFLNMILWGGNAWFVY). Residues 234-259 (KETSLHSPSNTSAPHSQGGIPPPTGI) are Cytoplasmic-facing.

Belongs to the synaptophysin/synaptobrevin family.

It is found in the cytoplasmic vesicle membrane. The protein localises to the melanosome. The protein is Synaptophysin-like protein 1 (SYPL1) of Homo sapiens (Human).